The following is a 449-amino-acid chain: Transcription factor AP-2 gamma (449 aa).

Lys-10 is covalently cross-linked (Glycyl lysine isopeptide (Lys-Gly) (interchain with G-Cter in SUMO)). Positions 13 to 58 (EDCEDRHDSSSNGNPRIPHLSSPGQHLYSPAPPLSHTGVAEYQPPP) are disordered. The PPxY motif motif lies at 59-64 (YFPPPY). A disordered region spans residues 94 to 130 (AATGSQQQAWPGRQSQEGSSLASHHSRSASLIPHISG). Polar residues predominate over residues 95 to 111 (ATGSQQQAWPGRQSQEG). A compositionally biased stretch (low complexity) spans 112 to 124 (SSLASHHSRSASL). Position 251 is a phosphoserine; by PKA (Ser-251). Residues 292–423 (RRKAAHVTLL…YIKEALIAID (132 aa)) are H-S-H (helix-span-helix), dimerization. Residues 426–449 (YMNPGDQSPADSSKTMEKMEKHRK) form a disordered region. Position 433 is a phosphoserine (Ser-433). Residues 439 to 449 (KTMEKMEKHRK) are compositionally biased toward basic and acidic residues.

Belongs to the AP-2 family. Binds DNA as a dimer. Can form homodimers or heterodimers with other AP-2 family members. Interacts with WWOX. Interacts with UBE2I. Interacts with KCTD1; this interaction represses transcription activation. Interacts with CITED2 (via C-terminus); the interaction stimulates TFAP2B-transcriptional activity. Interacts with CITED4. Interacts with MTA1. In terms of processing, sumoylated on Lys-10; which inhibits transcriptional activity. As to expression, expressed in lung, ovary and testis. Expressed in most squamous epithelia. Also, detected in several exocrine glands including the prostate, the preputial and salivary glands, serous glands of the tongue and ocular harderian glands.

It localises to the nucleus. Functionally, sequence-specific DNA-binding transcription factor that interacts with cellular enhancer elements to regulate transcription of selected genes, and which plays a key role in early embryonic development. AP-2 factors bind to the consensus sequence 5'-GCCNNNGGC-3' and activate genes involved in a large spectrum of important biological functions. TFAP2C plays a key role in early embryonic development by regulating both inner cell mass (ICM) and trophectoderm differentiation. At the 8-cell stage, during morula development, controls expression of cell-polarity genes. Upon trophoblast commitment, binds to late trophectoderm genes in blastocysts together with CDX2, and later to extra-embryonic ectoderm genes together with SOX2. Binds to both closed and open chromatin with other transcription factors. The polypeptide is Transcription factor AP-2 gamma (Mus musculus (Mouse)).